We begin with the raw amino-acid sequence, 1127 residues long: WD repeat and HMG-box DNA-binding protein 1 (1127 aa).

7 WD repeats span residues 11-50 (GHPE…DPKS), 52-91 (SIGE…GILT), 92-131 (RFTT…QQKT), 134-173 (GHSA…CEAV), 184-223 (FNAK…NICT), 228-267 (FITQ…CLER), and 271-310 (EKGY…DVKQ). 2 disordered regions span residues 811-1013 (AAEQ…AENK) and 1064-1127 (KAKG…FKKE). The segment covering 819-829 (QNEEEDEEEED) has biased composition (acidic residues). Over residues 846-857 (GDSRAKPVKQDQ) the composition is skewed to basic and acidic residues. The segment covering 858-877 (YEENNEEEMEEEEKEQEEAL) has biased composition (acidic residues). Composition is skewed to polar residues over residues 881–891 (TPTANPFNKSV) and 918–937 (SASQ…TSIL). A compositionally biased stretch (low complexity) spans 948-960 (SASGSPSTSKSDS). Positions 1013–1076 (KKPKTGFQLW…GDYPGEDGAD (64 aa)) form a DNA-binding region, HMG box. Positions 1087 to 1100 (NMASNGCPQENTDS) are enriched in polar residues.

Homodimer. Found in oocytes and in various other cells.

The protein localises to the nucleus. The protein resides in the nucleoplasm. It localises to the cytoplasm. In terms of biological role, core replisome component that acts as a replication initiation factor. Binds directly to the CMG complex and functions as a hub to recruit additional proteins to the replication fork. The polypeptide is WD repeat and HMG-box DNA-binding protein 1 (wdhd1) (Xenopus laevis (African clawed frog)).